Consider the following 450-residue polypeptide: Phosphoglucosamine mutase (450 aa).

Ser103 (phosphoserine intermediate) is an active-site residue. Mg(2+) contacts are provided by Ser103, Asp243, Asp245, and Asp247. Position 103 is a phosphoserine (Ser103).

The protein belongs to the phosphohexose mutase family. The cofactor is Mg(2+). Activated by phosphorylation.

The enzyme catalyses alpha-D-glucosamine 1-phosphate = D-glucosamine 6-phosphate. Catalyzes the conversion of glucosamine-6-phosphate to glucosamine-1-phosphate. The chain is Phosphoglucosamine mutase from Lactobacillus helveticus (strain DPC 4571).